The chain runs to 282 residues: Bis(5'-nucleosyl)-tetraphosphatase, symmetrical (282 aa).

This sequence belongs to the Ap4A hydrolase family. In terms of assembly, monomer.

It carries out the reaction P(1),P(4)-bis(5'-adenosyl) tetraphosphate + H2O = 2 ADP + 2 H(+). Hydrolyzes diadenosine 5',5'''-P1,P4-tetraphosphate to yield ADP. The sequence is that of Bis(5'-nucleosyl)-tetraphosphatase, symmetrical from Escherichia coli O157:H7.